The sequence spans 872 residues: Endoribonuclease ysh1 (872 aa).

Zn(2+) is bound by residues His84, His86, Asp88, His89, His175, and Asp196. The active-site Proton donor is the His447. Residue His469 coordinates Zn(2+). Disordered regions lie at residues 682–706, 741–777, and 844–872; these read VKQSAKLKHHHHHHSDLELPNPHAH, RANRTTKADPSVSAAVKTKSDAAGETPAESQEDESTE, and GHPAARASNGTQGNKEVAVSKSNEIEARA. The segment covering 686-695 has biased composition (basic residues); the sequence is AKLKHHHHHH.

It belongs to the metallo-beta-lactamase superfamily. RNA-metabolizing metallo-beta-lactamase-like family. CPSF2/YSH1 subfamily.

The protein resides in the nucleus. Its function is as follows. Component of the cleavage factor I (CF I) involved in pre-mRNA 3'-end processing. This chain is Endoribonuclease ysh1 (ysh1), found in Aspergillus fumigatus (strain ATCC MYA-4609 / CBS 101355 / FGSC A1100 / Af293) (Neosartorya fumigata).